The chain runs to 124 residues: UPF0102 protein Msil_0293 (124 aa).

This sequence belongs to the UPF0102 family.

This chain is UPF0102 protein Msil_0293, found in Methylocella silvestris (strain DSM 15510 / CIP 108128 / LMG 27833 / NCIMB 13906 / BL2).